Consider the following 398-residue polypeptide: Tryptophan synthase beta chain (398 aa).

Lys88 is modified (N6-(pyridoxal phosphate)lysine).

The protein belongs to the TrpB family. In terms of assembly, tetramer of two alpha and two beta chains. Pyridoxal 5'-phosphate serves as cofactor.

The enzyme catalyses (1S,2R)-1-C-(indol-3-yl)glycerol 3-phosphate + L-serine = D-glyceraldehyde 3-phosphate + L-tryptophan + H2O. The protein operates within amino-acid biosynthesis; L-tryptophan biosynthesis; L-tryptophan from chorismate: step 5/5. In terms of biological role, the beta subunit is responsible for the synthesis of L-tryptophan from indole and L-serine. In Haemophilus influenzae (strain PittGG), this protein is Tryptophan synthase beta chain.